Reading from the N-terminus, the 386-residue chain is Protein MGF 360-4L (386 aa).

It belongs to the asfivirus MGF 360 family.

Plays a role in virus cell tropism, and may be required for efficient virus replication in macrophages. The sequence is that of Protein MGF 360-4L from Ornithodoros (relapsing fever ticks).